Here is a 417-residue protein sequence, read N- to C-terminus: Serine hydroxymethyltransferase (417 aa).

(6S)-5,6,7,8-tetrahydrofolate contacts are provided by residues L121 and 125–127 (GHL). Residue K229 is modified to N6-(pyridoxal phosphate)lysine. Residue 355–357 (SPF) coordinates (6S)-5,6,7,8-tetrahydrofolate.

It belongs to the SHMT family. In terms of assembly, homodimer. The cofactor is pyridoxal 5'-phosphate.

Its subcellular location is the cytoplasm. The catalysed reaction is (6R)-5,10-methylene-5,6,7,8-tetrahydrofolate + glycine + H2O = (6S)-5,6,7,8-tetrahydrofolate + L-serine. Its pathway is one-carbon metabolism; tetrahydrofolate interconversion. The protein operates within amino-acid biosynthesis; glycine biosynthesis; glycine from L-serine: step 1/1. Catalyzes the reversible interconversion of serine and glycine with tetrahydrofolate (THF) serving as the one-carbon carrier. This reaction serves as the major source of one-carbon groups required for the biosynthesis of purines, thymidylate, methionine, and other important biomolecules. Also exhibits THF-independent aldolase activity toward beta-hydroxyamino acids, producing glycine and aldehydes, via a retro-aldol mechanism. The protein is Serine hydroxymethyltransferase of Citrobacter koseri (strain ATCC BAA-895 / CDC 4225-83 / SGSC4696).